A 216-amino-acid chain; its full sequence is Thiopurine S-methyltransferase (216 aa).

S-adenosyl-L-methionine contacts are provided by tryptophan 11, leucine 46, glutamate 67, and arginine 122.

Belongs to the class I-like SAM-binding methyltransferase superfamily. TPMT family.

Its subcellular location is the cytoplasm. It catalyses the reaction S-adenosyl-L-methionine + a thiopurine = S-adenosyl-L-homocysteine + a thiopurine S-methylether.. This is Thiopurine S-methyltransferase from Vibrio parahaemolyticus serotype O3:K6 (strain RIMD 2210633).